The chain runs to 848 residues: Neuroligin-3 (848 aa).

The N-terminal stretch at 1–37 (MWLQLGLPSLSLSPTPTVGRSLCLILWFLSLVLRAST) is a signal peptide. Residues 38 to 709 (QAPAPTVNTH…NPRDYSTELS (672 aa)) lie on the Extracellular side of the membrane. N-linked (GlcNAc...) asparagine glycosylation occurs at Asn-98. An intrachain disulfide couples Cys-106 to Cys-141. A disordered region spans residues 169–195 (CRKGGSGAKKQGEDLADNDGDEDEDIR). The span at 182–194 (DLADNDGDEDEDI) shows a compositional bias: acidic residues. 2 disulfides stabilise this stretch: Cys-340–Cys-351 and Cys-510–Cys-544. Asn-545 is a glycosylation site (N-linked (GlcNAc...) asparagine). Polar residues-rich tracts occupy residues 645–656 (TKVPPPDTTHSS) and 677–689 (AYSN…SWNG). A disordered region spans residues 645 to 691 (TKVPPPDTTHSSHITRRPNGKTWSTKRPAISPAYSNENAPGSWNGDQ). The helical transmembrane segment at 710–730 (VTIAVGASLLFLNVLAFAALY) threads the bilayer. Topologically, residues 731–848 (YRKDKRRQEP…LPNSHSTTRV (118 aa)) are cytoplasmic. Position 745 is a phosphoserine (Ser-745). At Tyr-792 the chain carries Phosphotyrosine.

The protein belongs to the type-B carboxylesterase/lipase family. As to quaternary structure, homodimer, and heterodimer with NLGN1 and NLGN2. Interacts with neurexins NRXN1, NRXN2 and NRXN3. Interaction with neurexins is mediated by heparan sulfate glycan modification on neurexin. Interacts (via its C-terminus) with DLG4/PSD-95 (via PDZ domain 3). In terms of processing, the N-terminus is blocked. As to expression, detected in brain and on hippocampus neurons, especially at excitatory synapses. Detected in retina (at protein level). Expressed in brain, spinal cord and dorsal root ganglion.

Its subcellular location is the cell membrane. It localises to the synapse. In terms of biological role, cell surface protein involved in cell-cell-interactions via its interactions with neurexin family members. Plays a role in synapse function and synaptic signal transmission, and probably mediates its effects by recruiting and clustering other synaptic proteins. May promote the initial formation of synapses, but is not essential for this. May also play a role in glia-glia or glia-neuron interactions in the developing peripheral nervous system. In Rattus norvegicus (Rat), this protein is Neuroligin-3 (Nlgn3).